Consider the following 55-residue polypeptide: Small ribosomal subunit protein uS14 (55 aa).

Residues Cys-20, Cys-23, Cys-38, and Cys-41 each contribute to the Zn(2+) site.

It belongs to the universal ribosomal protein uS14 family. Zn(2+) serves as cofactor.

In Dictyostelium discoideum (Social amoeba), this protein is Small ribosomal subunit protein uS14 (rps29).